Reading from the N-terminus, the 88-residue chain is UPF0335 protein Mnod_5968 (88 aa).

This sequence belongs to the UPF0335 family.

The chain is UPF0335 protein Mnod_5968 from Methylobacterium nodulans (strain LMG 21967 / CNCM I-2342 / ORS 2060).